A 159-amino-acid chain; its full sequence is Allergen Arg r 1 (159 aa).

The N-terminal stretch at 1-16 (MALIILLVACLSVVSA) is a signal peptide. 2 disulfides stabilise this stretch: C50–C155 and C109–C134.

Belongs to the calycin superfamily. Histamine-binding salivary protein family. Not glycosylated.

Its subcellular location is the secreted. In Argas reflexus (European pigeon tick), this protein is Allergen Arg r 1.